A 222-amino-acid chain; its full sequence is Putative ankyrin repeat protein L36 (222 aa).

7 ANK repeats span residues 1-14 (MVKY…NVDA), 15-44 (QNSR…NIYA), 45-74 (NDNH…NIRA), 76-104 (EDSA…TNYE), 105-134 (YSDY…KITD), 136-161 (AMFM…SLPC), and 163-191 (SYSE…KINK).

This Acanthamoeba polyphaga (Amoeba) protein is Putative ankyrin repeat protein L36.